A 425-amino-acid polypeptide reads, in one-letter code: MQVELADRAAARPSETGEAPPSSPAAAAAASAAAEDAPLLPGGGGGVRRRVVVSERFRQRSGSFRREVRRAAEETYLLTRLTLILLRYLGIGYRWIRQFLALCCYTFLLMPGFIQVVYYYFFSSQVCRSVVYGEQPRNRLDLYIPTDRTGLKPVVAFVTGGAWIIGYKGWGALLGRRLAERGILVACIDYRNFPQGTIGDMVEDASQGIAFVCNNIASYGGDPERIYLVGQSAGAHIAACTLLHQAIKESGEGDASTWSIAQLKAYFGISGGYNLLNLVDHFHKRGLYRSIFLSIMEGEESLQKFSPLVMVKDPAARSAVSLLPRIFLFHGTSDYSIPSAESEAFFDALQQNGAKADLFLYDGKTHTDLFLQDPLRGGRDKLLEEIVTVIHNDNPDTSAQHLAVPVARRLVPEFMLMLAGRVSPF.

A compositionally biased stretch (basic and acidic residues) spans 1 to 10 (MQVELADRAA). The segment at 1 to 42 (MQVELADRAAARPSETGEAPPSSPAAAAAASAAAEDAPLLPG) is disordered. Residues 24-34 (PAAAAAASAAA) show a composition bias toward low complexity. The next 2 helical transmembrane spans lie at 99-119 (FLAL…VVYY) and 154-174 (VVAF…GALL). Residues 160-162 (GGA) and 231-233 (QSA) each bind substrate. Catalysis depends on residues serine 232, aspartate 334, and histidine 366.

The protein belongs to the AB hydrolase superfamily. Isoprenylcysteine methylesterase family.

It is found in the endoplasmic reticulum membrane. It localises to the golgi apparatus membrane. It catalyses the reaction [protein]-C-terminal S-[(2E,6E)-farnesyl]-L-cysteine methyl ester + H2O = [protein]-C-terminal S-[(2E,6E)-farnesyl]-L-cysteine + methanol + H(+). Functionally, catalyzes the demethylation of isoprenylcysteine methylesters. The sequence is that of Probable isoprenylcysteine alpha-carbonyl methylesterase ICMEL1 (IMCEL1) from Oryza sativa subsp. japonica (Rice).